The primary structure comprises 58 residues: Small ribosomal subunit protein bS21 (58 aa).

The interval V28–F58 is disordered. Basic and acidic residues predominate over residues D31 to S42. Positions I43–F58 are enriched in basic residues.

This sequence belongs to the bacterial ribosomal protein bS21 family.

The polypeptide is Small ribosomal subunit protein bS21 (Syntrophomonas wolfei subsp. wolfei (strain DSM 2245B / Goettingen)).